The primary structure comprises 1493 residues: Sister chromatid cohesion protein 2 (1493 aa).

Position 43 is a phosphoserine; in mutant scc2-8A (S43). Position 67 is a phosphothreonine (T67). S74 is subject to Phosphoserine; in mutant scc2-8A. S127 and S157 each carry phosphoserine. Residues 151–170 are disordered; sequence SNAGNLSFNDNSSNKKTKTS. The residue at position 162 (S162) is a Phosphoserine; in mutant scc2-8A. The residue at position 163 (S163) is a Phosphoserine. A phosphothreonine mark is found at T231 and T236. A phosphoserine mark is found at S305 and S320. T360 is subject to Phosphothreonine; in mutant scc2-8A. HEAT repeat units follow at residues 695 to 732, 734 to 771, 806 to 843, and 1132 to 1169; these read NLYD…KDKV, LSNP…YFEF, TKVY…KVHE, and FNSR…LEER. S753 bears the Phosphoserine mark. A Phosphoserine; in mutant scc2-8A modification is found at S1179. Residue S1182 is modified to Phosphoserine. The residue at position 1183 (S1183) is a Phosphoserine; in mutant scc2-8A. Phosphoserine is present on S1185. Residues 1244–1281 form an HEAT 5 repeat; the sequence is TNPSHSIPTVIALFASTSQYIRHVAYELLEDLFEKYET.

It belongs to the SCC2/Nipped-B family. Interacts with SCC4. Interacts with the cohesin complex, which is composed of: the SMC1 and SMC3 heterodimer attached via their hinge domain, MCD1/SCC1 which link them, and IRR1/SCC3, which interacts with MCD1. Post-translationally, phosphorylated at alternative sites Ser-43, Ser-74, Ser-162, Thr-360, Ser-1179 and Ser-1183 when the principal phosphorylation sites Thr-67, Ser-127, Ser-157, Ser-163, Thr-231, Thr-236, Ser-305 and Ser-320 are mutated to alanines.

It localises to the nucleus. The protein localises to the chromosome. It is found in the centromere. Plays a structural role in chromatin and is involved in sister chromatid cohesion. Forms a complex with SCC4 required for the stable association of the cohesin complex with chromatin, which may act by hydrolyzing ATP from SMC1 and SMC3 heads. Binds to the nucleosome-free promoter regions of ribosomal protein genes and tRNA genes. Involved in transcriptional regulation by cooperating with the RSC complex to maintain nucleosome exhaustion at its binding sites. The protein is Sister chromatid cohesion protein 2 (SCC2) of Saccharomyces cerevisiae (strain ATCC 204508 / S288c) (Baker's yeast).